The following is a 279-amino-acid chain: Chromatin modification-related protein EAF5 (279 aa).

The segment at 147-179 is disordered; the sequence is QLQPHANAGKSGSAGTSATITTTTPHMAHSMDP. Over residues 154–170 the composition is skewed to low complexity; the sequence is AGKSGSAGTSATITTTT.

This sequence belongs to the EAF5 family. In terms of assembly, component of the NuA4 histone acetyltransferase complex composed of at least ACT1, ARP4, YAF9, VID21, SWC4, EAF3, EAF5, EAF6, EAF7, EPL1, ESA1, TRA1 and YNG2.

The protein localises to the nucleus. In terms of biological role, component of the NuA4 histone acetyltransferase complex which is involved in transcriptional activation of selected genes principally by acetylation of nucleosomal histone H4 and H2A. The NuA4 complex is also involved in DNA repair. The protein is Chromatin modification-related protein EAF5 (EAF5) of Saccharomyces cerevisiae (strain ATCC 204508 / S288c) (Baker's yeast).